The following is a 177-amino-acid chain: Ribulose bisphosphate carboxylase small subunit, chloroplastic (177 aa).

The transit peptide at 1–55 directs the protein to the chloroplast; sequence MASLMSNAAVVTASTAAQANMVAPFSGLKSTSAFPVSRKSNVDITSLATNGGRVN.

The protein belongs to the RuBisCO small chain family. Heterohexadecamer of 8 large and 8 small subunits.

It localises to the plastid. Its subcellular location is the chloroplast. RuBisCO catalyzes two reactions: the carboxylation of D-ribulose 1,5-bisphosphate, the primary event in carbon dioxide fixation, as well as the oxidative fragmentation of the pentose substrate. Both reactions occur simultaneously and in competition at the same active site. Although the small subunit is not catalytic it is essential for maximal activity. This is Ribulose bisphosphate carboxylase small subunit, chloroplastic from Silene latifolia subsp. alba (White campion).